The chain runs to 418 residues: Glutamyl-tRNA reductase (418 aa).

Substrate contacts are provided by residues 49 to 52 (TCNR), Ser-109, 114 to 116 (EPQ), and Gln-120. The active-site Nucleophile is the Cys-50. Residue 189 to 194 (GAGETI) coordinates NADP(+).

The protein belongs to the glutamyl-tRNA reductase family. Homodimer.

It catalyses the reaction (S)-4-amino-5-oxopentanoate + tRNA(Glu) + NADP(+) = L-glutamyl-tRNA(Glu) + NADPH + H(+). It functions in the pathway porphyrin-containing compound metabolism; protoporphyrin-IX biosynthesis; 5-aminolevulinate from L-glutamyl-tRNA(Glu): step 1/2. Functionally, catalyzes the NADPH-dependent reduction of glutamyl-tRNA(Glu) to glutamate 1-semialdehyde (GSA). The protein is Glutamyl-tRNA reductase of Salmonella heidelberg (strain SL476).